A 320-amino-acid polypeptide reads, in one-letter code: o-succinylbenzoate synthase (320 aa).

The active-site Proton donor is the lysine 133. Mg(2+)-binding residues include aspartate 161, glutamate 190, and aspartate 213. Lysine 235 (proton acceptor) is an active-site residue.

Belongs to the mandelate racemase/muconate lactonizing enzyme family. MenC type 1 subfamily. Requires a divalent metal cation as cofactor.

The catalysed reaction is (1R,6R)-6-hydroxy-2-succinyl-cyclohexa-2,4-diene-1-carboxylate = 2-succinylbenzoate + H2O. It participates in quinol/quinone metabolism; 1,4-dihydroxy-2-naphthoate biosynthesis; 1,4-dihydroxy-2-naphthoate from chorismate: step 4/7. The protein operates within quinol/quinone metabolism; menaquinone biosynthesis. Converts 2-succinyl-6-hydroxy-2,4-cyclohexadiene-1-carboxylate (SHCHC) to 2-succinylbenzoate (OSB). The protein is o-succinylbenzoate synthase of Salmonella paratyphi B (strain ATCC BAA-1250 / SPB7).